A 126-amino-acid chain; its full sequence is C-type natriuretic peptide 1 (126 aa).

Positions Met1–Ala22 are cleaved as a signal peptide. Positions Arg23 to Arg104 are excised as a propeptide. Cys110 and Cys126 are oxidised to a cystine.

The protein belongs to the natriuretic peptide family.

The protein localises to the secreted. Exhibits natriuretic and vasodepressant activity. Has cGMP-stimulating activity. May help to regulate body fluid homeostasis in a variety of aquatic environments. This is C-type natriuretic peptide 1 from Takifugu rubripes (Japanese pufferfish).